We begin with the raw amino-acid sequence, 108 residues long: Tubulin-specific chaperone A (108 aa).

Ala2 bears the N-acetylalanine mark.

The protein belongs to the TBCA family. In terms of assembly, supercomplex made of cofactors A to E. Cofactors A and D function by capturing and stabilizing tubulin in a quasi-native conformation. Cofactor E binds to the cofactor D-tubulin complex; interaction with cofactor C then causes the release of tubulin polypeptides that are committed to the native state.

It localises to the cytoplasm. Its subcellular location is the cytoskeleton. Functionally, tubulin-folding protein; involved in the early step of the tubulin folding pathway. The protein is Tubulin-specific chaperone A (TBCA) of Homo sapiens (Human).